Reading from the N-terminus, the 99-residue chain is Protein dpy-30 homolog (99 aa).

N-acetylmethionine is present on M1. The segment at 1–26 (MESEQMLEGQTQVAENPHSEYGLTDS) is disordered. S19 bears the Phosphoserine mark. K35 bears the N6-acetyllysine; alternate mark. K35 participates in a covalent cross-link: Glycyl lysine isopeptide (Lys-Gly) (interchain with G-Cter in SUMO2); alternate.

Belongs to the dpy-30 family. As to quaternary structure, homodimer. Core component of several methyltransferase-containing complexes including MLL1/MLL, MLL2/3 (also named ASCOM complex) and MLL4/WBP7. Each complex is at least composed of ASH2L, RBBP5, WDR5, DPY30, one or more specific histone methyltransferases (KMT2A/MLL1, KMT2D/MLL2, KMT2C/MLL3 and KMT2B/MLL4), and the facultative components MEN1, HCFC1, HCFC2, NCOA6, KDM6A, PAXIP1/PTIP, PAGR1 and alpha- and beta-tubulin PAXIP1/PTIP, PAGR1 and alpha- and beta-tubulin. Interacts with ASH2L. The interaction with ASH2L is direct. Interacts with ARFGEF1. Component of the SET1 complex, at least composed of the catalytic subunit (SETD1A or SETD1B), WDR5, WDR82, RBBP5, ASH2L/ASH2, CXXC1/CFP1, HCFC1 and DPY30.

It is found in the nucleus. The protein resides in the golgi apparatus. It localises to the trans-Golgi network. Its function is as follows. As part of the MLL1/MLL complex, involved in the methylation of histone H3 at 'Lys-4', particularly trimethylation. Histone H3 'Lys-4' methylation represents a specific tag for epigenetic transcriptional activation. May play some role in histone H3 acetylation. In embryonic stem (ES) cells, plays a crucial role in the differentiation potential, particularly along the neural lineage, regulating gene induction and histone H3 'Lys-4' methylation at key developmental loci, including that mediated by retinoic acid. Does not affect ES cell self-renewal. May also play an indirect or direct role in endosomal transport. The sequence is that of Protein dpy-30 homolog (Dpy30) from Mus musculus (Mouse).